A 165-amino-acid polypeptide reads, in one-letter code: Probable calcium-binding protein CML18 (165 aa).

EF-hand domains lie at 16 to 51 (EQLAELREIFRSFDQNKDGSLTELELGSLLRSLGLK), 52 to 87 (PSQDQLDTLIQKADRNNNGLVEFSEFVALVEPDLVK), 90 to 125 (YTDDQLKAIFRMFDRDGNGYITAAELAHSMAKLGHA), and 126 to 161 (LTAEELTGMIKEADRDGDGCIDFQEFVQAITSAAFD). 19 residues coordinate Ca(2+): Asp29, Asn31, Asp33, Ser35, Glu40, Asp65, Asn67, Asn69, Glu76, Asp103, Asp105, Asn107, Tyr109, Glu114, Asp139, Asp141, Asp143, Cys145, and Glu150.

Calcium and pH-dependent interaction with NHX1 (increases when pH decreases, better at pH 5.5 than at pH 7.5). Also interacts with the CPB protein At2g18750.

The protein localises to the vacuole. Its function is as follows. Potential calcium sensor that modulates ion selectivity of NHX1. The polypeptide is Probable calcium-binding protein CML18 (CML18) (Arabidopsis thaliana (Mouse-ear cress)).